Consider the following 147-residue polypeptide: Ubiquitin-conjugating enzyme E2 D3 (147 aa).

The UBC core domain occupies 1-147 (MALKRINKEL…SREWTQKYAM (147 aa)). Cysteine 21 and cysteine 107 are joined by a disulfide. Cysteine 85 functions as the Glycyl thioester intermediate in the catalytic mechanism.

The protein belongs to the ubiquitin-conjugating enzyme family. In terms of assembly, interacts with SCF (SKP1-CUL1-F-box protein) E3 ubiquitin ligase complex; when Cullin is neddylated, the interaction between the E2 and the SCF complex is strengthened. Interacts with DAPK3. Interacts with BRCA1; the DNA damage checkpoint promotes the association with BRCA1 after ionizing radiation. Interacts non-covalently with ubiquitin. Interacts with E3 ubiquitin-protein ligase CBLC. Interacts with UBTD1. Interacts with RIGI and RNF135; involved in RIGI ubiquitination and activation. Phosphorylated by AURKB.

Its subcellular location is the cell membrane. It localises to the endosome membrane. It carries out the reaction S-ubiquitinyl-[E1 ubiquitin-activating enzyme]-L-cysteine + [E2 ubiquitin-conjugating enzyme]-L-cysteine = [E1 ubiquitin-activating enzyme]-L-cysteine + S-ubiquitinyl-[E2 ubiquitin-conjugating enzyme]-L-cysteine.. The enzyme catalyses S-ubiquitinyl-[E1 ubiquitin-activating enzyme]-L-cysteine + [acceptor protein]-L-lysine = [E1 ubiquitin-activating enzyme]-L-cysteine + N(6)-monoubiquitinyl-[acceptor protein]-L-lysine.. Its pathway is protein modification; protein ubiquitination. Accepts ubiquitin from the E1 complex and catalyzes its covalent attachment to other proteins. In vitro catalyzes 'Lys-11'-, as well as 'Lys-48'-linked polyubiquitination. Cooperates with the E2 CDC34 and the SCF(FBXW11) E3 ligase complex for the polyubiquitination of NFKBIA leading to its subsequent proteasomal degradation. Acts as an initiator E2, priming the phosphorylated NFKBIA target at positions 'Lys-21' and/or 'Lys-22' with a monoubiquitin. Ubiquitin chain elongation is then performed by CDC34, building ubiquitin chains from the UBE2D3-primed NFKBIA-linked ubiquitin. Also acts as an initiator E2, in conjunction with RNF8, for the priming of PCNA. Monoubiquitination of PCNA, and its subsequent polyubiquitination, are essential events in the operation of the DNA damage tolerance (DDT) pathway that is activated after DNA damage caused by UV or chemical agents during S-phase. Associates with the BRCA1/BARD1 E3 ligase complex to perform ubiquitination at DNA damage sites following ionizing radiation leading to DNA repair. Targets DAPK3 for ubiquitination which influences promyelocytic leukemia protein nuclear body (PML-NB) formation in the nucleus. In conjunction with the MDM2 and TOPORS E3 ligases, functions ubiquitination of p53/TP53. In conjunction with the CBL E3 ligase, targets EGFR for polyubiquitination at the plasma membrane as well as during its internalization and transport on endosomes. In conjunction with the STUB1 E3 quality control E3 ligase, ubiquitinates unfolded proteins to catalyze their immediate destruction. Together with RNF135, catalyzes the viral RNA-dependent 'Lys-63'-linked polyubiquitination of RIGI to activate the downstream signaling pathway that leads to interferon beta production. Together with ZNF598, catalyzes ubiquitination of 40S ribosomal proteins in response to ribosome collisions. In cooperation with the GATOR2 complex, catalyzes 'Lys-6'-linked ubiquitination of NPRL2. The sequence is that of Ubiquitin-conjugating enzyme E2 D3 (UBE2D3) from Bos taurus (Bovine).